Here is a 175-residue protein sequence, read N- to C-terminus: Large ribosomal subunit protein bL17 (175 aa).

Residues 124–175 (VKKSKPTAPAQAVATKPAVEETREAAAAQPQEPEVEISEVKDPAEECEAKAD) are disordered. Positions 161–175 (SEVKDPAEECEAKAD) are enriched in basic and acidic residues.

It belongs to the bacterial ribosomal protein bL17 family. In terms of assembly, part of the 50S ribosomal subunit. Contacts protein L32.

This chain is Large ribosomal subunit protein bL17, found in Geobacter sulfurreducens (strain ATCC 51573 / DSM 12127 / PCA).